Reading from the N-terminus, the 166-residue chain is Keratin, type II cytoskeletal 68 kDa, component IB (166 aa).

In terms of domain architecture, IF rod spans 1–41 (EAKDDLARLLRDYQDAMNVKLALDVEIATYRKLLEGEECRM). Residues 1-41 (EAKDDLARLLRDYQDAMNVKLALDVEIATYRKLLEGEECRM) form a coil 2B region. A tail region spans residues 42–166 (SGECPSAVSI…FSQSSQRTSR (125 aa)). Positions 122-146 (GFGGGSSGFGSGSGGRSGVSGGGLS) are enriched in gly residues. The tract at residues 122–166 (GFGGGSSGFGSGSGGRSGVSGGGLSSGSSRGGSVRFSQSSQRTSR) is disordered. Residues 147–166 (SGSSRGGSVRFSQSSQRTSR) show a composition bias toward low complexity.

The protein belongs to the intermediate filament family. As to quaternary structure, heterotetramer of two type I and two type II keratins.

This chain is Keratin, type II cytoskeletal 68 kDa, component IB, found in Bos taurus (Bovine).